A 195-amino-acid polypeptide reads, in one-letter code: Nicotinamide riboside kinase 1 (195 aa).

An ATP-binding site is contributed by 10 to 18 (GVTNGGKTT). Mg(2+) is bound by residues Thr-17 and Asp-36. The active-site Proton acceptor is the Asp-36. Substrate contacts are provided by residues 36–39 (DDFF) and 55–56 (YD). Arg-128 is a binding site for ATP. Residues Arg-129 and 134–135 (YE) each bind substrate. ATP contacts are provided by residues 132 to 134 (RVY) and 172 to 174 (RSE).

Belongs to the uridine kinase family. NRK subfamily. In terms of assembly, monomer.

The catalysed reaction is beta-nicotinamide D-riboside + ATP = beta-nicotinamide D-ribonucleotide + ADP + H(+). It carries out the reaction beta-D-ribosylnicotinate + ATP = nicotinate beta-D-ribonucleotide + ADP + H(+). Its pathway is cofactor biosynthesis; NAD(+) biosynthesis. Its function is as follows. Catalyzes the phosphorylation of nicotinamide riboside (NR) and nicotinic acid riboside (NaR) to form nicotinamide mononucleotide (NMN) and nicotinic acid mononucleotide (NaMN). This Mus musculus (Mouse) protein is Nicotinamide riboside kinase 1 (Nmrk1).